We begin with the raw amino-acid sequence, 732 residues long: Polyribonucleotide nucleotidyltransferase (732 aa).

Residues aspartate 515 and aspartate 521 each contribute to the Mg(2+) site. Positions 581-641 (PKLELFNVDP…KNVDAAKDYI (61 aa)) constitute a KH domain. Residues 672 to 731 (GDEFTGSVKSVVDFGVFIELKDGVDGLLHISKIKSPLNVGDQVKVCVSEQKGNKISLSLV) form the S1 motif domain.

The protein belongs to the polyribonucleotide nucleotidyltransferase family. The cofactor is Mg(2+).

The protein resides in the cytoplasm. It carries out the reaction RNA(n+1) + phosphate = RNA(n) + a ribonucleoside 5'-diphosphate. Functionally, involved in mRNA degradation. Catalyzes the phosphorolysis of single-stranded polyribonucleotides processively in the 3'- to 5'-direction. In Campylobacter concisus (strain 13826), this protein is Polyribonucleotide nucleotidyltransferase.